The chain runs to 931 residues: Isoleucine--tRNA ligase (931 aa).

The 'HIGH' region motif lies at 57-67 (PFANGNIHMGH). Residue Glu556 participates in L-isoleucyl-5'-AMP binding. The 'KMSKS' region signature appears at 597–601 (KMSKS). Lys600 contributes to the ATP binding site. Residues Cys890, Cys893, Cys910, and Cys913 each contribute to the Zn(2+) site.

Belongs to the class-I aminoacyl-tRNA synthetase family. IleS type 1 subfamily. Monomer. Zn(2+) is required as a cofactor.

The protein resides in the cytoplasm. It catalyses the reaction tRNA(Ile) + L-isoleucine + ATP = L-isoleucyl-tRNA(Ile) + AMP + diphosphate. Functionally, catalyzes the attachment of isoleucine to tRNA(Ile). As IleRS can inadvertently accommodate and process structurally similar amino acids such as valine, to avoid such errors it has two additional distinct tRNA(Ile)-dependent editing activities. One activity is designated as 'pretransfer' editing and involves the hydrolysis of activated Val-AMP. The other activity is designated 'posttransfer' editing and involves deacylation of mischarged Val-tRNA(Ile). This chain is Isoleucine--tRNA ligase, found in Lactobacillus delbrueckii subsp. bulgaricus (strain ATCC BAA-365 / Lb-18).